We begin with the raw amino-acid sequence, 615 residues long: Elongation factor 4 (615 aa).

Positions 14 to 200 (SKIRNFCIIA…KVAELIPAPT (187 aa)) constitute a tr-type G domain. GTP contacts are provided by residues 26–31 (DHGKST) and 147–150 (NKID).

It belongs to the TRAFAC class translation factor GTPase superfamily. Classic translation factor GTPase family. LepA subfamily.

The protein resides in the cell membrane. It catalyses the reaction GTP + H2O = GDP + phosphate + H(+). Required for accurate and efficient protein synthesis under certain stress conditions. May act as a fidelity factor of the translation reaction, by catalyzing a one-codon backward translocation of tRNAs on improperly translocated ribosomes. Back-translocation proceeds from a post-translocation (POST) complex to a pre-translocation (PRE) complex, thus giving elongation factor G a second chance to translocate the tRNAs correctly. Binds to ribosomes in a GTP-dependent manner. The protein is Elongation factor 4 of Corynebacterium aurimucosum (strain ATCC 700975 / DSM 44827 / CIP 107346 / CN-1) (Corynebacterium nigricans).